The chain runs to 308 residues: MRPPVTGGRGGGGFRGGRDGGGRGFGGGRSFGGGRSGDRGRSGPRGRGRGAPRGRGGPPRGGMKGGSKVIVEPHRHAGVFIAKGKEDALVTKNLVPGEAVYNEKRISVQNEDGTKVEYRVWNPFRSKLAAAILGGVDNIWIKPGAKVLYLGAASGTTVSHVSDLVGPEGCVYAVEFSHRSGRDLVNMAKKRTNVIPIIEDARHPAKYRMLVGMVDVIFSDVAQPDQARILALNASFFLKTGGHFVISIKANCIDSTVAAEAVFQSEVKKLQQEQFKPAEQVTLEPFERDHACVVGGYRMPKKQKTPAS.

Positions 1–68 (MRPPVTGGRG…PRGGMKGGSK (68 aa)) are disordered. The segment covering 22 to 35 (GRGFGGGRSFGGGR) has biased composition (gly residues). Over residues 42 to 52 (SGPRGRGRGAP) the composition is skewed to basic residues. Over residues 53-65 (RGRGGPPRGGMKG) the composition is skewed to gly residues. Residues 156 to 157 (TT), 175 to 176 (EF), 200 to 201 (DA), and 220 to 223 (DVAQ) each bind S-adenosyl-L-methionine.

It belongs to the methyltransferase superfamily. Fibrillarin family. As to quaternary structure, component of box C/D small nucleolar ribonucleoprotein (snoRNP) particles. Interacts with SKP1A. In terms of tissue distribution, expressed in roots, leaves and flowers. Expressed in stems.

It localises to the nucleus. The protein localises to the nucleolus. The enzyme catalyses a ribonucleotide in rRNA + S-adenosyl-L-methionine = a 2'-O-methylribonucleotide in rRNA + S-adenosyl-L-homocysteine + H(+). It carries out the reaction L-glutaminyl-[histone H2A] + S-adenosyl-L-methionine = N(5)-methyl-L-glutaminyl-[histone H2A] + S-adenosyl-L-homocysteine + H(+). Functionally, S-adenosyl-L-methionine-dependent methyltransferase that has the ability to methylate both RNAs and proteins. Involved in pre-rRNA processing. Utilizes the methyl donor S-adenosyl-L-methionine to catalyze the site-specific 2'-hydroxyl methylation of ribose moieties in pre-ribosomal RNA. Site specificity is provided by a guide RNA that base pairs with the substrate. Methylation occurs at a characteristic distance from the sequence involved in base pairing with the guide RNA. Also acts as a protein methyltransferase by mediating methylation of 'Gln-105' of histone H2A (H2AQ105me), a modification that impairs binding of the FACT complex and is specifically present at 35S ribosomal DNA locus. Binds monophosphate phosphoinositides in vitro. This Arabidopsis thaliana (Mouse-ear cress) protein is rRNA 2'-O-methyltransferase fibrillarin 1.